The primary structure comprises 89 residues: Large ribosomal subunit protein bL27 (89 aa).

The disordered stretch occupies residues 1 to 24; that stretch reads MAHKKAGGSSRNGRDSDGRRLGVK.

This sequence belongs to the bacterial ribosomal protein bL27 family.

In Azorhizobium caulinodans (strain ATCC 43989 / DSM 5975 / JCM 20966 / LMG 6465 / NBRC 14845 / NCIMB 13405 / ORS 571), this protein is Large ribosomal subunit protein bL27.